We begin with the raw amino-acid sequence, 642 residues long: Extracellular metalloproteinase 4 (642 aa).

The signal sequence occupies residues methionine 1–alanine 18. Positions histidine 19 to alanine 253 are excised as a propeptide. Over residues serine 49–phenylalanine 60 the composition is skewed to polar residues. The tract at residues serine 49–glycine 72 is disordered. A compositionally biased stretch (low complexity) spans threonine 61–serine 71. N-linked (GlcNAc...) asparagine glycosylation occurs at asparagine 419. Histidine 436 serves as a coordination point for Zn(2+). Glutamate 437 is a catalytic residue. Residue histidine 440 coordinates Zn(2+). N-linked (GlcNAc...) asparagine glycans are attached at residues asparagine 509 and asparagine 602.

This sequence belongs to the peptidase M36 family. Zn(2+) is required as a cofactor.

It localises to the secreted. Functionally, secreted metalloproteinase that allows assimilation of proteinaceous substrates and probably acts as a virulence factor. This is Extracellular metalloproteinase 4 (MEP4) from Arthroderma gypseum (strain ATCC MYA-4604 / CBS 118893) (Microsporum gypseum).